A 282-amino-acid chain; its full sequence is Ribosomal RNA small subunit methyltransferase A (282 aa).

Asn-28, Leu-30, Gly-55, Glu-77, Asp-103, and Asn-122 together coordinate S-adenosyl-L-methionine.

This sequence belongs to the class I-like SAM-binding methyltransferase superfamily. rRNA adenine N(6)-methyltransferase family. RsmA subfamily.

Its subcellular location is the cytoplasm. The enzyme catalyses adenosine(1518)/adenosine(1519) in 16S rRNA + 4 S-adenosyl-L-methionine = N(6)-dimethyladenosine(1518)/N(6)-dimethyladenosine(1519) in 16S rRNA + 4 S-adenosyl-L-homocysteine + 4 H(+). Its function is as follows. Specifically dimethylates two adjacent adenosines (A1518 and A1519) in the loop of a conserved hairpin near the 3'-end of 16S rRNA in the 30S particle. May play a critical role in biogenesis of 30S subunits. This Paracoccus denitrificans (strain Pd 1222) protein is Ribosomal RNA small subunit methyltransferase A.